The chain runs to 320 residues: 1-aminocyclopropane-1-carboxylate oxidase (320 aa).

A Fe2OG dioxygenase domain is found at 154-254; the sequence is PTFGTKVSNY…RMSLASFYNP (101 aa). 3 residues coordinate Fe cation: His178, Asp180, and His235.

The protein belongs to the iron/ascorbate-dependent oxidoreductase family. Requires Fe cation as cofactor.

The catalysed reaction is 1-aminocyclopropane-1-carboxylate + L-ascorbate + O2 = ethene + L-dehydroascorbate + hydrogen cyanide + CO2 + 2 H2O. It functions in the pathway alkene biosynthesis; ethylene biosynthesis via S-adenosyl-L-methionine; ethylene from S-adenosyl-L-methionine: step 2/2. This is 1-aminocyclopropane-1-carboxylate oxidase (ACO) from Persea americana (Avocado).